The sequence spans 496 residues: Xylulose kinase (496 aa).

83–84 (MH) is a binding site for substrate. Aspartate 237 acts as the Proton acceptor in catalysis.

This sequence belongs to the FGGY kinase family.

The enzyme catalyses D-xylulose + ATP = D-xylulose 5-phosphate + ADP + H(+). Its function is as follows. Catalyzes the phosphorylation of D-xylulose to D-xylulose 5-phosphate. This chain is Xylulose kinase, found in Staphylococcus epidermidis (strain ATCC 35984 / DSM 28319 / BCRC 17069 / CCUG 31568 / BM 3577 / RP62A).